A 257-amino-acid chain; its full sequence is UPF0246 protein Spea_1078 (257 aa).

The protein belongs to the UPF0246 family.

The sequence is that of UPF0246 protein Spea_1078 from Shewanella pealeana (strain ATCC 700345 / ANG-SQ1).